Here is a 127-residue protein sequence, read N- to C-terminus: Glycine cleavage system H protein 1 (127 aa).

Positions 20–101 (SVTVGITPYA…LGAGWFFRFI (82 aa)) constitute a Lipoyl-binding domain. The residue at position 60 (Lys-60) is an N6-lipoyllysine.

It belongs to the GcvH family. In terms of assembly, the glycine cleavage system is composed of four proteins: P, T, L and H. (R)-lipoate is required as a cofactor.

Functionally, the glycine cleavage system catalyzes the degradation of glycine. The H protein shuttles the methylamine group of glycine from the P protein to the T protein. This Pseudomonas syringae pv. tomato (strain ATCC BAA-871 / DC3000) protein is Glycine cleavage system H protein 1.